The following is a 536-amino-acid chain: Membrane protein insertase YidC (536 aa).

The next 5 helical transmembrane spans lie at 7–27 (FFIFAFLFVSFLLWQAWQSQS), 338–358 (LLSTIHNFIGNWGFSIILITF), 419–439 (LPVFIQMPIFLSLYYMLIGSV), 453–473 (LSDQDPYYVLPIFMGLTMFFI), and 494–514 (PFIFTVFFLWFPSGLVLYYIV).

It belongs to the OXA1/ALB3/YidC family. Type 1 subfamily. As to quaternary structure, interacts with the Sec translocase complex via SecD. Specifically interacts with transmembrane segments of nascent integral membrane proteins during membrane integration.

It is found in the cell membrane. Functionally, required for the insertion and/or proper folding and/or complex formation of integral membrane proteins into the membrane. Involved in integration of membrane proteins that insert both dependently and independently of the Sec translocase complex, as well as at least some lipoproteins. Aids folding of multispanning membrane proteins. This Buchnera aphidicola subsp. Schizaphis graminum (strain Sg) protein is Membrane protein insertase YidC.